A 185-amino-acid polypeptide reads, in one-letter code: Large ribosomal subunit protein uL5 (185 aa).

It belongs to the universal ribosomal protein uL5 family. In terms of assembly, part of the 50S ribosomal subunit; part of the 5S rRNA/L5/L18/L25 subcomplex. Contacts the 5S rRNA and the P site tRNA. Forms a bridge to the 30S subunit in the 70S ribosome.

In terms of biological role, this is one of the proteins that bind and probably mediate the attachment of the 5S RNA into the large ribosomal subunit, where it forms part of the central protuberance. In the 70S ribosome it contacts protein S13 of the 30S subunit (bridge B1b), connecting the 2 subunits; this bridge is implicated in subunit movement. Contacts the P site tRNA; the 5S rRNA and some of its associated proteins might help stabilize positioning of ribosome-bound tRNAs. This chain is Large ribosomal subunit protein uL5, found in Rhizobium etli (strain CIAT 652).